The primary structure comprises 212 residues: uncharacterized protein (212 aa).

The first 18 residues, 1–18 (MQLTQVLAVAILAAGVSA), serve as a signal peptide directing secretion. The disordered stretch occupies residues 108-180 (VSHNRVNAKQ…KDYGHKDYGH (73 aa)). Over residues 117 to 180 (QRRDDKKDYG…KDYGHKDYGH (64 aa)) the composition is skewed to basic and acidic residues. Residues 120-210 (DDKKDYGKND…KDYGYKGYDD (91 aa)) form a 15 X 5 AA tandem repeats of K-D-Y-G-H region. Repeat 1 spans residues 123–127 (KDYGK). The 2; truncated repeat unit spans residues 128–132 (NDYGK). Repeat copies occupy residues 133-137 (KDYGK), 138-142 (KDYGK), and 143-147 (KDYGK). Residues 148–152 (KEYDP) form a 6; truncated repeat. 5 consecutive repeat copies span residues 166-170 (KDYGH), 171-175 (KDYGH), 176-180 (KDYGH), 181-185 (KDYGH), and 186-190 (KDYGH). A 12; truncated repeat occupies 191–195 (DDYGY). The 13; truncated repeat unit spans residues 196 to 200 (KGYDD). The 14; truncated repeat unit spans residues 201–205 (KDYGY). The 15; truncated repeat unit spans residues 206–210 (KGYDD).

The protein resides in the secreted. This is an uncharacterized protein from Arthroderma benhamiae (strain ATCC MYA-4681 / CBS 112371) (Trichophyton mentagrophytes).